We begin with the raw amino-acid sequence, 182 residues long: Transcription termination/antitermination protein NusG (182 aa).

In terms of domain architecture, KOW spans 131–161 (GEVVRVNDGPFADFNGTVEEVDYEKSRLKVS).

Belongs to the NusG family.

In terms of biological role, participates in transcription elongation, termination and antitermination. The polypeptide is Transcription termination/antitermination protein NusG (Vibrio cholerae serotype O1 (strain ATCC 39315 / El Tor Inaba N16961)).